A 468-amino-acid polypeptide reads, in one-letter code: Aspartate ammonia-lyase (468 aa).

L-aspartate is bound by residues Thr101, Ser140, Thr141, Asn142, Thr187, and His188. Residues 317 to 326 form an SS loop region; it reads GSSIMPGKVN. Ser318 serves as the catalytic Proton acceptor. L-aspartate is bound by residues Ser319 and Lys324.

This sequence belongs to the class-II fumarase/aspartase family. Aspartase subfamily. In terms of assembly, homotetramer.

The enzyme catalyses L-aspartate = fumarate + NH4(+). Unlike E.coli aspartase, the enzyme is not activated by the presence of divalent metal ions at alkaline pH. Functionally, catalyzes the reversible conversion of L-aspartate to fumarate and ammonia. Is highly specific for L-aspartate in the deamination reaction, and cannot use alternative substrates such as D-aspartic acid, alpha-methyl-DL-aspartic acid, beta-methyl-DL-aspartic acid or L-glutamate. In the reverse reaction, alternative nucleophiles (such as hydroxylamine, hydrazine, methoxylamine and methylamine) can replace ammonia in vitro, leading to the formation of N-substituted aspartic acid derivatives. This Bacillus sp protein is Aspartate ammonia-lyase.